Reading from the N-terminus, the 377-residue chain is Probable isocitrate dehydrogenase [NAD] subunit alpha, mitochondrial (377 aa).

The substrate site is built by R131, R141, R162, and D249. Mg(2+)-binding residues include D249, D273, and D277.

It belongs to the isocitrate and isopropylmalate dehydrogenases family. In terms of assembly, heterooligomer of subunits alpha, beta, and gamma in the apparent ratio of 2:1:1. It depends on Mg(2+) as a cofactor. Requires Mn(2+) as cofactor.

Its subcellular location is the mitochondrion. The enzyme catalyses D-threo-isocitrate + NAD(+) = 2-oxoglutarate + CO2 + NADH. Functionally, probable catalytic subunit of the enzyme which catalyzes the decarboxylation of isocitrate (ICT) into alpha-ketoglutarate. This is Probable isocitrate dehydrogenase [NAD] subunit alpha, mitochondrial from Drosophila melanogaster (Fruit fly).